Here is a 134-residue protein sequence, read N- to C-terminus: Transcription antitermination protein NusB (134 aa).

Belongs to the NusB family.

Involved in transcription antitermination. Required for transcription of ribosomal RNA (rRNA) genes. Binds specifically to the boxA antiterminator sequence of the ribosomal RNA (rrn) operons. This chain is Transcription antitermination protein NusB, found in Shewanella frigidimarina (strain NCIMB 400).